A 351-amino-acid polypeptide reads, in one-letter code: Glycerol-3-phosphate dehydrogenase 1-like protein (351 aa).

An NAD(+)-binding site is contributed by 12–17 (GSGNWG). Lysine 122 contacts substrate. NAD(+) is bound at residue alanine 155. Lysine 206 acts as the Proton acceptor in catalysis. Arginine 271, lysine 298, and glutamine 300 together coordinate NAD(+). Substrate is bound at residue 271-272 (RN).

Belongs to the NAD-dependent glycerol-3-phosphate dehydrogenase family. Interacts with SCN5A.

It localises to the cytoplasm. It carries out the reaction sn-glycerol 3-phosphate + NAD(+) = dihydroxyacetone phosphate + NADH + H(+). In terms of biological role, plays a role in regulating cardiac sodium current; decreased enzymatic activity with resulting increased levels of glycerol 3-phosphate activating the DPD1L-dependent SCN5A phosphorylation pathway, may ultimately lead to decreased sodium current; cardiac sodium current may also be reduced due to alterations of NAD(H) balance induced by DPD1L. The chain is Glycerol-3-phosphate dehydrogenase 1-like protein (Gpd1l) from Mus musculus (Mouse).